The following is a 347-amino-acid chain: Methylthioribose-1-phosphate isomerase (347 aa).

Substrate-binding positions include 45–47, Arg88, and Gln197; that span reads RGA. The Proton donor role is filled by Asp238. Residue 248-249 coordinates substrate; sequence NK.

It belongs to the eIF-2B alpha/beta/delta subunits family. MtnA subfamily.

It catalyses the reaction 5-(methylsulfanyl)-alpha-D-ribose 1-phosphate = 5-(methylsulfanyl)-D-ribulose 1-phosphate. It functions in the pathway amino-acid biosynthesis; L-methionine biosynthesis via salvage pathway; L-methionine from S-methyl-5-thio-alpha-D-ribose 1-phosphate: step 1/6. Its function is as follows. Catalyzes the interconversion of methylthioribose-1-phosphate (MTR-1-P) into methylthioribulose-1-phosphate (MTRu-1-P). This chain is Methylthioribose-1-phosphate isomerase, found in Nostoc sp. (strain PCC 7120 / SAG 25.82 / UTEX 2576).